Here is a 317-residue protein sequence, read N- to C-terminus: Beta-ketoacyl-[acyl-carrier-protein] synthase III (317 aa).

Catalysis depends on residues Cys112 and His244. Residues 245–249 (QANLR) are ACP-binding. Asn274 is a catalytic residue.

It belongs to the thiolase-like superfamily. FabH family. Homodimer.

The protein localises to the cytoplasm. The catalysed reaction is malonyl-[ACP] + acetyl-CoA + H(+) = 3-oxobutanoyl-[ACP] + CO2 + CoA. It participates in lipid metabolism; fatty acid biosynthesis. Functionally, catalyzes the condensation reaction of fatty acid synthesis by the addition to an acyl acceptor of two carbons from malonyl-ACP. Catalyzes the first condensation reaction which initiates fatty acid synthesis and may therefore play a role in governing the total rate of fatty acid production. Possesses both acetoacetyl-ACP synthase and acetyl transacylase activities. Its substrate specificity determines the biosynthesis of branched-chain and/or straight-chain of fatty acids. The polypeptide is Beta-ketoacyl-[acyl-carrier-protein] synthase III (Pectobacterium atrosepticum (strain SCRI 1043 / ATCC BAA-672) (Erwinia carotovora subsp. atroseptica)).